A 1372-amino-acid polypeptide reads, in one-letter code: DNA-directed RNA polymerase subunit beta' (1372 aa).

The Zn(2+) site is built by C69, C71, C84, and C87. Positions 460, 462, and 464 each coordinate Mg(2+). Zn(2+)-binding residues include C808, C882, C889, and C892.

Belongs to the RNA polymerase beta' chain family. The RNAP catalytic core consists of 2 alpha, 1 beta, 1 beta' and 1 omega subunit. When a sigma factor is associated with the core the holoenzyme is formed, which can initiate transcription. Mg(2+) is required as a cofactor. Requires Zn(2+) as cofactor.

It carries out the reaction RNA(n) + a ribonucleoside 5'-triphosphate = RNA(n+1) + diphosphate. Functionally, DNA-dependent RNA polymerase catalyzes the transcription of DNA into RNA using the four ribonucleoside triphosphates as substrates. The chain is DNA-directed RNA polymerase subunit beta' from Rickettsia typhi (strain ATCC VR-144 / Wilmington).